Reading from the N-terminus, the 415-residue chain is Histidine--tRNA ligase (415 aa).

The protein belongs to the class-II aminoacyl-tRNA synthetase family. Homodimer.

The protein resides in the cytoplasm. The catalysed reaction is tRNA(His) + L-histidine + ATP = L-histidyl-tRNA(His) + AMP + diphosphate + H(+). This is Histidine--tRNA ligase from Clostridium botulinum (strain Okra / Type B1).